The following is a 501-amino-acid chain: Glycogen synthase 1 (501 aa).

Lys-18 contacts ADP-alpha-D-glucose.

It belongs to the glycosyltransferase 1 family. Bacterial/plant glycogen synthase subfamily.

The enzyme catalyses [(1-&gt;4)-alpha-D-glucosyl](n) + ADP-alpha-D-glucose = [(1-&gt;4)-alpha-D-glucosyl](n+1) + ADP + H(+). It functions in the pathway glycan biosynthesis; glycogen biosynthesis. Its function is as follows. Synthesizes alpha-1,4-glucan chains using ADP-glucose. The chain is Glycogen synthase 1 from Geobacter sulfurreducens (strain ATCC 51573 / DSM 12127 / PCA).